We begin with the raw amino-acid sequence, 426 residues long: 3-phosphoshikimate 1-carboxyvinyltransferase (426 aa).

3-phosphoshikimate contacts are provided by lysine 22, serine 23, and arginine 27. Lysine 22 provides a ligand contact to phosphoenolpyruvate. Glycine 96 and arginine 124 together coordinate phosphoenolpyruvate. The 3-phosphoshikimate site is built by serine 170, serine 171, glutamine 172, serine 198, aspartate 314, asparagine 337, and lysine 341. Glutamine 172 is a binding site for phosphoenolpyruvate. Aspartate 314 acts as the Proton acceptor in catalysis. Positions 345, 387, and 412 each coordinate phosphoenolpyruvate.

Belongs to the EPSP synthase family. In terms of assembly, monomer.

Its subcellular location is the cytoplasm. The enzyme catalyses 3-phosphoshikimate + phosphoenolpyruvate = 5-O-(1-carboxyvinyl)-3-phosphoshikimate + phosphate. It participates in metabolic intermediate biosynthesis; chorismate biosynthesis; chorismate from D-erythrose 4-phosphate and phosphoenolpyruvate: step 6/7. Catalyzes the transfer of the enolpyruvyl moiety of phosphoenolpyruvate (PEP) to the 5-hydroxyl of shikimate-3-phosphate (S3P) to produce enolpyruvyl shikimate-3-phosphate and inorganic phosphate. The polypeptide is 3-phosphoshikimate 1-carboxyvinyltransferase (Shewanella sediminis (strain HAW-EB3)).